A 67-amino-acid polypeptide reads, in one-letter code: Probable pilin MJ1400 (67 aa).

A propeptide spanning residues 1–13 is cleaved from the precursor; that stretch reads MKFIMKFIKSNKG. The short motif at 14-22 is the QXSXEXXXL element; sequence QISLEFSLL.

Post-translationally, the N-terminus is cleaved by the prepilin peptidase EppA, which recognizes the class III signal sequence.

The protein resides in the secreted. Its subcellular location is the cell surface. It is found in the fimbrium. The polypeptide is Probable pilin MJ1400 (Methanocaldococcus jannaschii (strain ATCC 43067 / DSM 2661 / JAL-1 / JCM 10045 / NBRC 100440) (Methanococcus jannaschii)).